The following is a 120-amino-acid chain: uncharacterized protein (120 aa).

A helical membrane pass occupies residues 93-109 (LCVGISTTMIIQVLFLL).

The protein resides in the membrane. This is an uncharacterized protein from Saccharomyces cerevisiae (strain ATCC 204508 / S288c) (Baker's yeast).